A 186-amino-acid polypeptide reads, in one-letter code: Protein MTH_152 (186 aa).

Belongs to the flavoredoxin family. Homodimer. FMN is required as a cofactor.

The protein is Protein MTH_152 of Methanothermobacter thermautotrophicus (strain ATCC 29096 / DSM 1053 / JCM 10044 / NBRC 100330 / Delta H) (Methanobacterium thermoautotrophicum).